A 291-amino-acid polypeptide reads, in one-letter code: Taste receptor type 2 member 16 (291 aa).

Residue Met1 is a topological domain, extracellular. The helical transmembrane segment at 2–22 (IPIQLTVFFMIIYVLESLTII) threads the bilayer. The Cytoplasmic portion of the chain corresponds to 23–41 (VQSSLIVAVLGREWLQVRR). The helical transmembrane segment at 42-62 (LMPVDMILISLGISRFCLQWA) threads the bilayer. Over 63–84 (SMLNBFCSYFNLNYVLCNLTIT) the chain is Extracellular. A glycan (N-linked (GlcNAc...) asparagine) is linked at Asn80. Residues 85 to 105 (WEFFNILTFWLNSLLTVFYCI) form a helical membrane-spanning segment. Residues 106–125 (KVSSFTHHIFLWLRWRILRL) are Cytoplasmic-facing. A helical transmembrane segment spans residues 126–146 (FPWILLGSLMITCVTIIPSAI). At 147 to 182 (GNYIQIQLLTMEHLPRNSTVTDKLEKFHQYEFQAHT) the chain is on the extracellular side. A glycan (N-linked (GlcNAc...) asparagine) is linked at Asn163. The helical transmembrane segment at 183-203 (VALVIPFILFLASTILLMASL) threads the bilayer. The Cytoplasmic portion of the chain corresponds to 204–228 (TKQIQHHSTGHCNPSMKAHFTALRS). The helical transmembrane segment at 229–249 (LAVLFIVFTSYFLTILITIIG) threads the bilayer. Topologically, residues 250-257 (TLFDRRCW) are extracellular. Residues 258–278 (LWVWEAFVYAFILMHSTSLML) traverse the membrane as a helical segment. The Cytoplasmic segment spans residues 279 to 291 (SSPTLKRILKGKC).

It belongs to the G-protein coupled receptor T2R family. As to quaternary structure, interacts with RTP3 and RTP4.

It localises to the cell membrane. Receptor that may play a role in the perception of bitterness and is gustducin-linked. May play a role in sensing the chemical composition of the gastrointestinal content. The activity of this receptor may stimulate alpha gustducin, mediate PLC-beta-2 activation and lead to the gating of TRPM5. In Gorilla gorilla gorilla (Western lowland gorilla), this protein is Taste receptor type 2 member 16 (TAS2R16).